A 346-amino-acid chain; its full sequence is Serpentine receptor class beta-11 (346 aa).

The next 7 membrane-spanning stretches (helical) occupy residues 26 to 46 (YQMI…LFKL), 57 to 77 (TIFI…LTTS), 102 to 122 (IWNF…CSVT), 139 to 159 (SVVM…CIIF), 186 to 206 (FTFF…DLIL), 239 to 259 (VFLI…VVFF), and 278 to 298 (TFST…SSFF).

This sequence belongs to the nematode receptor-like protein srb family.

It is found in the membrane. This chain is Serpentine receptor class beta-11 (srb-11), found in Caenorhabditis elegans.